We begin with the raw amino-acid sequence, 425 residues long: uncharacterized protein (425 aa).

An F-box domain is found at 2–53; the sequence is SFNLLDLPIVPRQKALKYLEPIDLFELSLCSKRMAQSVRDLKIEASAHFITL.

This is an uncharacterized protein from Caenorhabditis elegans.